Here is a 328-residue protein sequence, read N- to C-terminus: Malate dehydrogenase (328 aa).

11 to 17 (GAAGQIG) is a binding site for NAD(+). Residues Arg94 and Arg100 each coordinate substrate. NAD(+) contacts are provided by residues Asn107, Gln114, and 131 to 133 (VGN). Substrate-binding residues include Asn133 and Arg164. His189 acts as the Proton acceptor in catalysis.

Belongs to the LDH/MDH superfamily. MDH type 2 family.

The enzyme catalyses (S)-malate + NAD(+) = oxaloacetate + NADH + H(+). In terms of biological role, catalyzes the reversible oxidation of malate to oxaloacetate. This is Malate dehydrogenase from Xanthomonas campestris pv. campestris (strain B100).